The primary structure comprises 57 residues: MPAIQPLLYLTFLLLILLYLIITLYVWVVSTITYKTAVRHAALYQRSLFRWSLDHSL.

Over 1–8 the chain is Virion surface; it reads MPAIQPLL. The chain crosses the membrane as a helical span at residues 9 to 29; the sequence is YLTFLLLILLYLIITLYVWVV. The Intravirion segment spans residues 30–57; sequence STITYKTAVRHAALYQRSLFRWSLDHSL.

The protein belongs to the rubulavirus small hydrophobic protein family. As to quaternary structure, interacts with host TNFRSF1A, RIPK1 and IRAK1; these interactions interfere with host NF-kappa-B activation at the level of receptor complexes. Interacts with host protein UBQLN4.

Its subcellular location is the virion membrane. The protein resides in the host cell membrane. In terms of biological role, plays a role in the inhibition of the host NF-kappa-B pathway. This inhibition occurs at the receptor level, by preventing the signaling of TNFR1 as well as IL-1R and TLR3. The chain is Small hydrophobic protein (SH) from Homo sapiens (Human).